The chain runs to 607 residues: Siderochrome iron transporter 2 (607 aa).

Positions 1–46 are disordered; the sequence is MGLFGSFGARNKATPQVPPGAVAKAPEGTPKGPETNDQPDMDSSRL. The next 13 helical transmembrane spans lie at 86 to 106, 129 to 149, 152 to 172, 180 to 200, 210 to 230, 242 to 262, 297 to 317, 326 to 346, 367 to 387, 404 to 424, 432 to 452, 459 to 479, and 499 to 519; these read VWATYAWIWVCFFLLALQSGI, ILSSIIGGVLKLPIAKILNLW, AEGFLVFVGVYTIGLIILAAC, AGYVLFWIGYDAIYLILDVFV, AFTFAFASTPFICTAFTAPLA, WAYGAFAIIMPVALAPLAVVF, IIGAFLLMAAWVLLLLPFSLA, SAAFIAMVIIGFCLFFAFAAW, LGACVMAATLYFSFYCWDLYF, YMTQIYNVGSCFWGVVFGLWV, HTCLFFGLPLMILGAGLMIHF, IGYVIMCQIFIAFGGGTLVIG, and FIGLFSSLGGAIGYAVAAAIY. N-linked (GlcNAc...) asparagine glycosylation occurs at Asn-538. The chain crosses the membrane as a helical span at residues 573–593; sequence FGAVAATCILILGIPAIAVWK.

The protein belongs to the major facilitator superfamily.

The protein localises to the cell membrane. Functionally, major facilitator transporter involved in ferrichrome (FC) uptake. The sequence is that of Siderochrome iron transporter 2 from Aspergillus fumigatus (strain ATCC MYA-4609 / CBS 101355 / FGSC A1100 / Af293) (Neosartorya fumigata).